The chain runs to 339 residues: Ketol-acid reductoisomerase (NADP(+)) (339 aa).

The region spanning M1 to T182 is the KARI N-terminal Rossmann domain. Residues Y24 to Q27, R48, S51, S53, and D83 to Q86 each bind NADP(+). The active site involves H108. G134 is a binding site for NADP(+). One can recognise a KARI C-terminal knotted domain in the interval N183 to I328. Mg(2+)-binding residues include D191, E195, E227, and E231. Substrate is bound at residue S252.

It belongs to the ketol-acid reductoisomerase family. Mg(2+) serves as cofactor.

The enzyme catalyses (2R)-2,3-dihydroxy-3-methylbutanoate + NADP(+) = (2S)-2-acetolactate + NADPH + H(+). It catalyses the reaction (2R,3R)-2,3-dihydroxy-3-methylpentanoate + NADP(+) = (S)-2-ethyl-2-hydroxy-3-oxobutanoate + NADPH + H(+). It functions in the pathway amino-acid biosynthesis; L-isoleucine biosynthesis; L-isoleucine from 2-oxobutanoate: step 2/4. It participates in amino-acid biosynthesis; L-valine biosynthesis; L-valine from pyruvate: step 2/4. Its function is as follows. Involved in the biosynthesis of branched-chain amino acids (BCAA). Catalyzes an alkyl-migration followed by a ketol-acid reduction of (S)-2-acetolactate (S2AL) to yield (R)-2,3-dihydroxy-isovalerate. In the isomerase reaction, S2AL is rearranged via a Mg-dependent methyl migration to produce 3-hydroxy-3-methyl-2-ketobutyrate (HMKB). In the reductase reaction, this 2-ketoacid undergoes a metal-dependent reduction by NADPH to yield (R)-2,3-dihydroxy-isovalerate. The chain is Ketol-acid reductoisomerase (NADP(+)) from Novosphingobium aromaticivorans (strain ATCC 700278 / DSM 12444 / CCUG 56034 / CIP 105152 / NBRC 16084 / F199).